Here is a 500-residue protein sequence, read N- to C-terminus: Cytochrome P450 monooxygenase ausR (500 aa).

The helical transmembrane segment at 15-35 (GVGLYILWTVAVLFVIFKLLA) threads the bilayer. Cysteine 439 provides a ligand contact to heme.

Belongs to the cytochrome P450 family. Requires heme as cofactor.

It is found in the membrane. It participates in secondary metabolite biosynthesis; terpenoid biosynthesis. Functionally, cytochrome P450 monooxygenase; part of the gene cluster that mediates the biosynthesis of calidodehydroaustin, a fungal meroterpenoid. The first step of the pathway is the synthesis of 3,5-dimethylorsellinic acid by the polyketide synthase ausA. 3,5-dimethylorsellinic acid is then prenylated by the polyprenyl transferase ausN. Further epoxidation by the FAD-dependent monooxygenase ausM and cyclization by the probable terpene cyclase ausL lead to the formation of protoaustinoid A. Protoaustinoid A is then oxidized to spiro-lactone preaustinoid A3 by the combined action of the FAD-binding monooxygenases ausB and ausC, and the dioxygenase ausE. Acid-catalyzed keto-rearrangement and ring contraction of the tetraketide portion of preaustinoid A3 by ausJ lead to the formation of preaustinoid A4. The aldo-keto reductase ausK, with the help of ausH, is involved in the next step by transforming preaustinoid A4 into isoaustinone which is in turn hydroxylated by the P450 monooxygenase ausI to form austinolide. The cytochrome P450 monooxygenase ausG modifies austinolide to austinol. Austinol is further acetylated to austin by the O-acetyltransferase ausP, which spontaneously changes to dehydroaustin. The cytochrome P450 monooxygenase ausR then converts dehydroaustin is into 7-dehydrodehydroaustin. The hydroxylation catalyzed by ausR permits the O-acetyltransferase ausQ to add an additional acetyl group to the molecule, leading to the formation of acetoxydehydroaustin. The short chain dehydrogenase ausT catalyzes the reduction of the double bond present between carbon atoms 1 and 2 to convert 7-dehydrodehydroaustin into 1,2-dihydro-7-hydroxydehydroaustin. AusQ catalyzes not only an acetylation reaction but also the addition of the PKS ausV diketide product to 1,2-dihydro-7-hydroxydehydroaustin, forming precalidodehydroaustin. Finally, the iron/alpha-ketoglutarate-dependent dioxygenase converts precalidodehydroaustin into calidodehydroaustin. This chain is Cytochrome P450 monooxygenase ausR, found in Aspergillus calidoustus.